The primary structure comprises 638 residues: Gamma-aminobutyric acid receptor subunit theta (638 aa).

A signal peptide spans 1–21; sequence MGIRGMLRAAALLLLIRTWLA. The Extracellular portion of the chain corresponds to 22 to 267; sequence ESNGPSPTPK…FQVQREVRSY (246 aa). N-linked (GlcNAc...) asparagine glycosylation occurs at asparagine 127. Cysteine 183 and cysteine 197 form a disulfide bridge. A helical membrane pass occupies residues 268–288; the sequence is LVQVYWPTVLTTILSWISFWM. The Cytoplasmic segment spans residues 289-296; sequence NYDSSAAR. Residues 297-314 traverse the membrane as a helical segment; that stretch reads VTIGLTSILVLTTIDSHM. At 315–325 the chain is on the extracellular side; that stretch reads RDKLPHISCIK. The helical transmembrane segment at 326–346 threads the bilayer; the sequence is AIDIYILVCLFFVFLSLLEYV. The Cytoplasmic segment spans residues 347–617; it reads YINYLFFSQV…NRVPKVDRWS (271 aa). The disordered stretch occupies residues 491–515; the sequence is ACDDEDSEESLSSEESHGHGSSHTG. Over residues 492–502 the composition is skewed to acidic residues; it reads CDDEDSEESLS. Residues 618–638 traverse the membrane as a helical segment; it reads RFLFPLSFGLFNVVYWLYHVY.

Belongs to the ligand-gated ion channel (TC 1.A.9) family. Gamma-aminobutyric acid receptor (TC 1.A.9.5) subfamily. GABRQ sub-subfamily. In terms of assembly, heteropentamer, formed by a combination of alpha (GABRA1-6), beta (GABRB1-3), gamma (GABRG1-3), delta (GABRD), epsilon (GABRE), rho (GABRR1-3), pi (GABRP) and theta (GABRQ) chains, each subunit exhibiting distinct physiological and pharmacological properties. In terms of tissue distribution, expressed in brain, lung, and spleen.

The protein resides in the postsynaptic cell membrane. It is found in the cell membrane. It carries out the reaction chloride(in) = chloride(out). Potentiated by etomidate, propofol, pregnanolone and pentobarbital. In terms of biological role, theta subunit of the heteropentameric ligand-gated chloride channel gated by gamma-aminobutyric acid (GABA), a major inhibitory neurotransmitter in the brain. GABA-gated chloride channels, also named GABA(A) receptors (GABAAR), consist of five subunits arranged around a central pore and contain GABA active binding site(s) located at the alpha and beta subunit interfaces. When activated by GABA, GABAARs selectively allow the flow of chloride anions across the cell membrane down their electrochemical gradient. This Mus musculus (Mouse) protein is Gamma-aminobutyric acid receptor subunit theta.